The primary structure comprises 201 residues: Small ribosomal subunit protein uS4c (201 aa).

The tract at residues 15-44 (LGALPGLTSKRPRSGSDLRNQSRSGKKSQY) is disordered. One can recognise an S4 RNA-binding domain in the interval 89-150 (MRLDNILFRL…EQRSRALIQN (62 aa)).

It belongs to the universal ribosomal protein uS4 family. Part of the 30S ribosomal subunit. Contacts protein S5. The interaction surface between S4 and S5 is involved in control of translational fidelity.

The protein localises to the plastid. It localises to the chloroplast. In terms of biological role, one of the primary rRNA binding proteins, it binds directly to 16S rRNA where it nucleates assembly of the body of the 30S subunit. With S5 and S12 plays an important role in translational accuracy. This Calycanthus floridus var. glaucus (Eastern sweetshrub) protein is Small ribosomal subunit protein uS4c (rps4).